A 1055-amino-acid polypeptide reads, in one-letter code: Ephrin type-B receptor 2 (1055 aa).

An N-terminal signal peptide occupies residues Met-1–Ala-18. Residues Val-19–Leu-543 are Extracellular-facing. Residues Glu-20–Gln-202 enclose the Eph LBD domain. 2 cysteine pairs are disulfide-bonded: Cys-62–Cys-184 and Cys-97–Cys-107. Residues Asn-265, Asn-336, Asn-428, and Asn-482 are each glycosylated (N-linked (GlcNAc...) asparagine). Fibronectin type-III domains follow at residues Ile-324–Ala-434 and Ala-435–Glu-530. The chain crosses the membrane as a helical span at residues Ile-544–Val-564. At Cys-565–Gly-1055 the chain is on the cytoplasmic side. One can recognise a Protein kinase domain in the interval Val-621–Ile-884. Residues Ile-627–Val-635 and Lys-653 contribute to the ATP site. The active-site Proton acceptor is the Asp-746. Lys-891 participates in a covalent cross-link: Glycyl lysine isopeptide (Lys-Gly) (interchain with G-Cter in ubiquitin). Residues Thr-913 to Gln-977 form the SAM domain. Residues Ser-983 and Val-984 each carry the phosphoserine modification. The PDZ-binding (in isoform 2) signature appears at Val-984–Gly-986. Positions Ala-990 to Gly-1055 are disordered. Residues Arg-991–Cys-1002 show a composition bias toward basic residues. The segment covering Lys-1025–Asn-1049 has biased composition (basic and acidic residues).

It belongs to the protein kinase superfamily. Tyr protein kinase family. Ephrin receptor subfamily. In terms of assembly, heterotetramer upon binding of the ligand. The heterotetramer is composed of an ephrin dimer and a receptor dimer. Interacts (via PDZ-binding motif) with GRIP1 and PICK1 (via PDZ domain). Interacts with ARHGEF15; mediates ARHGEF15 phosphorylation, ubiquitination and degradation by the proteasome. Interacts with AQP1; involved in endolymph production in the inner ear. Interacts with SPSB1 and SPSB4. The phosphorylated form interacts with RASA1 (via SH2 domain 1). Interacts with EFNA5. Interacts with SH2D3C. Post-translationally, autophosphorylated; ligand binding stimulates autophosphorylation on tyrosine residues. In terms of processing, polyubiquitinated; ligand binding stimulates ubiquitination. Ubiquitinated by RNF186 at Lys-891, mainly through 'Lys-27'-linked polyubiquitin chains. Ubiquitinated by CRL2(KLHDC2) E3 ligase complex. Ligand binding induces cleavage by matrix metalloproteinases (MMPs) such as MMP7/MMP9, producing an EphB2/N-terminal fragment (NTF) and a C-terminal long fragment (EphB2-LF). EphB2-LF is further cleaved by MMPs, producing EphB2/CTF1 which is further cleaved by the PS1/gamma-secretase producing EphB2/CTF2. Brain, heart, lung, kidney, placenta, pancreas, liver and skeletal muscle. Preferentially expressed in fetal brain.

The protein resides in the cell membrane. It is found in the cell projection. Its subcellular location is the axon. The protein localises to the dendrite. The enzyme catalyses L-tyrosyl-[protein] + ATP = O-phospho-L-tyrosyl-[protein] + ADP + H(+). In terms of biological role, receptor tyrosine kinase which binds promiscuously transmembrane ephrin-B family ligands residing on adjacent cells, leading to contact-dependent bidirectional signaling into neighboring cells. The signaling pathway downstream of the receptor is referred to as forward signaling while the signaling pathway downstream of the ephrin ligand is referred to as reverse signaling. Functions in axon guidance during development. Involved in the guidance of commissural axons, that form a major interhemispheric connection between the 2 temporal lobes of the cerebral cortex. Also involved in guidance of contralateral inner ear efferent growth cones at the midline and of retinal ganglion cell axons to the optic disk. In addition to axon guidance, also regulates dendritic spines development and maturation and stimulates the formation of excitatory synapses. Upon activation by EFNB1, abolishes the ARHGEF15-mediated negative regulation on excitatory synapse formation. Controls other aspects of development including angiogenesis, palate development and in inner ear development through regulation of endolymph production. Forward and reverse signaling through the EFNB2/EPHB2 complex regulate movement and adhesion of cells that tubularize the urethra and septate the cloaca. May function as a tumor suppressor. May be involved in the regulation of platelet activation and blood coagulation. In Homo sapiens (Human), this protein is Ephrin type-B receptor 2 (EPHB2).